The following is a 354-amino-acid chain: Guanine nucleotide-binding protein alpha-2 subunit (354 aa).

A G-alpha domain is found at 33-354 (KIYKVLLLGA…QHSLKEAGMF (322 aa)). The G1 motif stretch occupies residues 36-49 (KVLLLGASDSGKST). GTP is bound by residues Asp-44, Ser-45, Gly-46, Lys-47, Ser-48, Thr-49, Asp-148, Leu-173, Thr-179, Gly-201, Asn-269, Lys-270, Asp-272, and Ala-326. Residue Ser-48 coordinates Mg(2+). The segment at 171 to 179 (DILRSRNST) is G2 motif. Position 179 (Thr-179) interacts with Mg(2+). A G3 motif region spans residues 194 to 203 (IRMFDVGGQR). The tract at residues 265-272 (ILFLNKFD) is G4 motif. The interval 324–329 (TTAVDT) is G5 motif.

Belongs to the G-alpha family. G proteins are composed of 3 units; alpha, beta and gamma. Binding of the beta-gamma subunit complex (git5-git11) to the alpha subunit (gpa2) facilitates interaction with GPCR git3. Interacts with GPCR git3; the interaction is direct and leads to activation of gpa2 upon glucose stimulation. Interacts with adenylate cyclase cyr1 (via N-terminus); the interaction is direct and serves to activate adenylate cyclase and cAMP-PKA signaling, to repress sexual development and gluconeogenesis. Requires Mg(2+) as cofactor.

It is found in the cell membrane. Its function is as follows. Alpha subunit of the heterotrimeric guanine nucleotide-binding protein (G protein) involved in glucose-induced cAMP signaling. Binds to its cognate transmembrane receptor git3, which senses extracellular glucose, and activates cAMP-PKA signaling to repress sexual development and gluconeogenesis. This chain is Guanine nucleotide-binding protein alpha-2 subunit, found in Schizosaccharomyces pombe (strain 972 / ATCC 24843) (Fission yeast).